The chain runs to 1149 residues: Tape measure protein (1149 aa).

8 helical membrane-spanning segments follow: residues 389-409 (VVIF…AGMV), 431-451 (MGTI…FMIA), 561-581 (LAFL…VSFL), 689-709 (AAVQ…PTLI), 726-746 (ALPA…QALI), 781-801 (ILMA…TAAI), 840-860 (LIAG…DFVP), and 865-885 (AGVQ…GSLL). The tract at residues 1084–1109 (RVDLFNTGSDNPNQPQSQSKNNQGEQ) is disordered. A compositionally biased stretch (low complexity) spans 1094-1106 (NPNQPQSQSKNNQ).

It localises to the host membrane. It is found in the virion. Its function is as follows. Plays a role in virion tail formation. The length of the tape measure protein is proportional to the length of the phage's tail. The polypeptide is Tape measure protein (TMP) (Streptococcus pneumoniae (Bacteriophage Dp-1)).